Here is a 469-residue protein sequence, read N- to C-terminus: 3-isopropylmalate dehydratase large subunit (469 aa).

Positions 347, 410, and 413 each coordinate [4Fe-4S] cluster.

Belongs to the aconitase/IPM isomerase family. LeuC type 1 subfamily. As to quaternary structure, heterodimer of LeuC and LeuD. It depends on [4Fe-4S] cluster as a cofactor.

The enzyme catalyses (2R,3S)-3-isopropylmalate = (2S)-2-isopropylmalate. It functions in the pathway amino-acid biosynthesis; L-leucine biosynthesis; L-leucine from 3-methyl-2-oxobutanoate: step 2/4. Functionally, catalyzes the isomerization between 2-isopropylmalate and 3-isopropylmalate, via the formation of 2-isopropylmaleate. The protein is 3-isopropylmalate dehydratase large subunit of Burkholderia ambifaria (strain MC40-6).